We begin with the raw amino-acid sequence, 111 residues long: uncharacterized protein (111 aa).

2 helical membrane-spanning segments follow: residues 29–49 (LLNF…ATAV) and 52–72 (ACFA…YLLA).

It is found in the membrane. This is an uncharacterized protein from Saccharomyces cerevisiae (strain ATCC 204508 / S288c) (Baker's yeast).